Here is a 321-residue protein sequence, read N- to C-terminus: Acetyl-coenzyme A carboxylase carboxyl transferase subunit beta, chloroplastic (321 aa).

Residues 47–321 form the CoA carboxyltransferase N-terminal domain; it reads LWAQCDNCEN…FWFYVLRSSL (275 aa). The Zn(2+) site is built by Cys51, Cys54, Cys70, and Cys73. A C4-type zinc finger spans residues 51-73; the sequence is CDNCENLLYLRFLRENQSVCKEC.

Belongs to the AccD/PCCB family. As to quaternary structure, acetyl-CoA carboxylase is a heterohexamer composed of biotin carboxyl carrier protein, biotin carboxylase and 2 subunits each of ACCase subunit alpha and ACCase plastid-coded subunit beta (accD). The cofactor is Zn(2+).

Its subcellular location is the plastid. The protein localises to the chloroplast stroma. It catalyses the reaction N(6)-carboxybiotinyl-L-lysyl-[protein] + acetyl-CoA = N(6)-biotinyl-L-lysyl-[protein] + malonyl-CoA. It participates in lipid metabolism; malonyl-CoA biosynthesis; malonyl-CoA from acetyl-CoA: step 1/1. Its function is as follows. Component of the acetyl coenzyme A carboxylase (ACC) complex. Biotin carboxylase (BC) catalyzes the carboxylation of biotin on its carrier protein (BCCP) and then the CO(2) group is transferred by the transcarboxylase to acetyl-CoA to form malonyl-CoA. The protein is Acetyl-coenzyme A carboxylase carboxyl transferase subunit beta, chloroplastic of Pinus thunbergii (Japanese black pine).